A 579-amino-acid polypeptide reads, in one-letter code: Nuclear receptor coactivator 5 (579 aa).

N-acetylmethionine is present on Met-1. Residues 1–78 form a disordered region; it reads MNTAPSRPSP…LRDHRDSRSV (78 aa). Positions 1 to 158 are transcription repression; the sequence is MNTAPSRPSP…RDSFDGRGPP (158 aa). Thr-3 is subject to Phosphothreonine. Phosphoserine is present on residues Ser-9, Ser-21, Ser-24, Ser-29, and Ser-34. 2 stretches are compositionally biased toward basic and acidic residues: residues 11–62 and 68–78; these read TRRD…DLRD and DLRDHRDSRSV. Ser-96, Ser-116, Ser-126, Ser-143, and Ser-151 each carry phosphoserine. A disordered region spans residues 148–173; that stretch reads YRDSFDGRGPPGPESQSRAKERLKRE. A compositionally biased stretch (basic and acidic residues) spans 164 to 173; the sequence is SRAKERLKRE. Thr-274 carries the phosphothreonine modification. Residues 345–349 carry the LXXLL motif motif; sequence LINLL. Disordered stretches follow at residues 375-428, 444-537, and 560-579; these read MRSS…PTSQ, VTAN…NFDN, and QTTA…QRHY. Position 378 is a phosphoserine (Ser-378). At Thr-379 the chain carries Phosphothreonine. Ser-381 bears the Phosphoserine mark. Residues 395–413 show a composition bias toward polar residues; the sequence is SGASLKTQPSSQPLQSGQV. Residues 446–457 are compositionally biased toward low complexity; it reads ANSSSASPSVAA. Residues 458 to 579 are transcription activation; sequence GNTPNQNFST…APMGSYQRHY (122 aa). Composition is skewed to polar residues over residues 459–485 and 520–537; these read NTPN…NQPP and SNMT…NFDN.

Binds HTATIP2/TIP30. Interacts with YLPM1. Forms a complex with ILF2, ILF3, YLPM1, KHDRBS1, RBMX and PPP1CA. In terms of tissue distribution, widely expressed.

Its subcellular location is the nucleus. In terms of biological role, nuclear receptor coregulator that can have both coactivator and corepressor functions. Interacts with nuclear receptors for steroids (ESR1 and ESR2) independently of the steroid binding domain (AF-2) of the ESR receptors, and with the orphan nuclear receptor NR1D2. Involved in the coactivation of nuclear steroid receptors (ER) as well as the corepression of MYC in response to 17-beta-estradiol (E2). This is Nuclear receptor coactivator 5 (NCOA5) from Homo sapiens (Human).